The sequence spans 484 residues: Arachin Ahy-3 (484 aa).

A signal peptide spans 1-20 (MAKLLALSVCFCFLVLGASS). Cystine bridges form between C32-C65 and C108-C305. The Cupin type-1 1 domain occupies 35 to 253 (QRLNAQRPDN…GFQVNEDIVR (219 aa)). Residues 208-233 (QQRSGRQSPKGEEQEQEQENEGGNVF) form a disordered region. A propeptide spanning residues 295 to 298 (DFNN) is cleaved from the precursor. In terms of domain architecture, Cupin type-1 2 spans 311–460 (MNIGKSTSAD…SYGLQYEQAR (150 aa)). Positions 479 to 484 (MIRTVA) are excised as a propeptide.

Belongs to the 11S seed storage protein (globulins) family. Hexamer; each subunit is composed of an acidic and a basic chain derived from a single precursor and linked by a disulfide bond.

In Arachis hypogaea (Peanut), this protein is Arachin Ahy-3.